We begin with the raw amino-acid sequence, 599 residues long: uncharacterized protein (599 aa).

The segment covering 1 to 10 (MEQQSENVYF) has biased composition (polar residues). Residues 1-146 (MEQQSENVYF…EPSFTLTELP (146 aa)) form a disordered region. Low complexity predominate over residues 11-20 (SGSESESLSD). A compositionally biased stretch (polar residues) spans 24–44 (RAQPQNQNSDNSRSASLTPPD). Composition is skewed to acidic residues over residues 46–56 (SDLEDYVDSDS) and 89–114 (NGSD…EEED). Residues 118 to 127 (RSSSRSAMDI) show a composition bias toward low complexity. Over residues 128–138 (SSEEDSGDDEP) the composition is skewed to acidic residues.

This sequence belongs to the IIV-6 229L family.

This is an uncharacterized protein from Aedes vexans (Inland floodwater mosquito).